Here is a 607-residue protein sequence, read N- to C-terminus: Glutamyl-tRNA(Gln) amidotransferase subunit E (607 aa).

This sequence belongs to the GatB/GatE family. GatE subfamily. In terms of assembly, heterodimer of GatD and GatE.

The enzyme catalyses L-glutamyl-tRNA(Gln) + L-glutamine + ATP + H2O = L-glutaminyl-tRNA(Gln) + L-glutamate + ADP + phosphate + H(+). Allows the formation of correctly charged Gln-tRNA(Gln) through the transamidation of misacylated Glu-tRNA(Gln) in organisms which lack glutaminyl-tRNA synthetase. The reaction takes place in the presence of glutamine and ATP through an activated gamma-phospho-Glu-tRNA(Gln). The GatDE system is specific for glutamate and does not act on aspartate. This is Glutamyl-tRNA(Gln) amidotransferase subunit E from Pyrobaculum islandicum (strain DSM 4184 / JCM 9189 / GEO3).